Here is a 376-residue protein sequence, read N- to C-terminus: Enoyl-[acyl-carrier-protein] reductase, mitochondrial (376 aa).

Tyr72 functions as the Proton donor in the catalytic mechanism. NADP(+)-binding positions include Asn154, 182-185 (TSAV), 205-207 (RDR), 280-283 (YGGM), 305-307 (YWI), and Lys369.

This sequence belongs to the zinc-containing alcohol dehydrogenase family. Quinone oxidoreductase subfamily. In terms of assembly, homodimer.

The protein resides in the mitochondrion matrix. The enzyme catalyses a 2,3-saturated acyl-[ACP] + NADP(+) = a (2E)-enoyl-[ACP] + NADPH + H(+). Functionally, catalyzes the NADPH-dependent reduction of trans-2-enoyl thioesters in mitochondrial fatty acid synthesis (fatty acid synthesis type II). Fatty acid chain elongation in mitochondria uses acyl carrier protein (ACP) as an acyl group carrier, but the enzyme accepts both ACP and CoA thioesters as substrates in vitro. Required for respiration and the maintenance of the mitochondrial compartment. The chain is Enoyl-[acyl-carrier-protein] reductase, mitochondrial (ETR1) from Eremothecium gossypii (strain ATCC 10895 / CBS 109.51 / FGSC 9923 / NRRL Y-1056) (Yeast).